A 379-amino-acid chain; its full sequence is Acetylornithine aminotransferase (379 aa).

Residues 93 to 94 (GA) and F120 each bind pyridoxal 5'-phosphate. R123 contacts N(2)-acetyl-L-ornithine. 205–208 (DEVQ) contacts pyridoxal 5'-phosphate. At K234 the chain carries N6-(pyridoxal phosphate)lysine. Residue S262 coordinates N(2)-acetyl-L-ornithine. T263 lines the pyridoxal 5'-phosphate pocket.

This sequence belongs to the class-III pyridoxal-phosphate-dependent aminotransferase family. ArgD subfamily. In terms of assembly, homodimer. The cofactor is pyridoxal 5'-phosphate.

The protein resides in the cytoplasm. The enzyme catalyses N(2)-acetyl-L-ornithine + 2-oxoglutarate = N-acetyl-L-glutamate 5-semialdehyde + L-glutamate. The protein operates within amino-acid biosynthesis; L-arginine biosynthesis; N(2)-acetyl-L-ornithine from L-glutamate: step 4/4. This chain is Acetylornithine aminotransferase, found in Streptococcus mutans serotype c (strain ATCC 700610 / UA159).